The chain runs to 173 residues: Terpene cyclase subB (173 aa).

4 consecutive transmembrane segments (helical) span residues 11–31 (PGYL…GLGW), 51–71 (ALMP…IYPF), 112–132 (LPFI…ALAL), and 141–161 (AFSA…QLLS).

Belongs to the paxB family.

The protein localises to the membrane. It participates in secondary metabolite biosynthesis; terpenoid biosynthesis. In terms of biological role, terpene cyclase; part of the gene cluster that mediates the biosynthesis of the immunosuppressants subglutinols, meroterpenoids consisting of an alpha-pyrone (4-hydroxy-5,6-dimethyl-2-pyrone) moiety attached to a decalin core fused to a five-membered cyclic ether carrying a prenylside chain. The first step of the pathway is the synthesis of the alpha-pyrone moiety by the polyketide synthase subA via condensation of one acetyl-CoA starter unit with 3 malonyl-CoA units and 2 methylations. The alpha-pyrone is then combined with geranylgeranyl pyrophosphate (GGPP) formed by the GGPP synthase subD through the action of the prenyltransferase subC to yield a linear alpha-pyrone diterpenoid. Subsequent steps in the subglutinol biosynthetic pathway involve the decalin core formation, which is thought to be initiated by the epoxidation of the C10-C11 olefin by the FAD-dependent oxidoreductase subE. The following cyclization cascade would be catalyzed by the terpene cyclase subB. Lastly, the FAD-dependent dehydrogenase subF probably catalyzes the five-membered cyclic ether formation to complete the formation of subglutinol A. Subsequent redox reactions appear to give rise to subglutinol C and D, however, it remains unclear which enzymes are responsible for these transformations. SubD may have secondary function in the conversion of the identified subglutinols to subglutinol analog 45, which seems to be the major product of the cluster. This is Terpene cyclase subB from Metarhizium robertsii (strain ARSEF 23 / ATCC MYA-3075) (Metarhizium anisopliae (strain ARSEF 23)).